An 858-amino-acid chain; its full sequence is DNA mismatch repair protein MutS (858 aa).

Residue 618–625 (GPNMGGKS) coordinates ATP.

The protein belongs to the DNA mismatch repair MutS family.

Functionally, this protein is involved in the repair of mismatches in DNA. It is possible that it carries out the mismatch recognition step. This protein has a weak ATPase activity. The polypeptide is DNA mismatch repair protein MutS (Shewanella woodyi (strain ATCC 51908 / MS32)).